Reading from the N-terminus, the 219-residue chain is Outer spore wall protein 4 (219 aa).

Residues 1–19 (MRFQLFIYFYFTIVVIAGT) form the signal peptide. The Extracellular portion of the chain corresponds to 20–170 (NTIQQFSDAG…KKKRLDRIKR (151 aa)). N-linked (GlcNAc...) asparagine glycans are attached at residues Asn-42, Asn-62, and Asn-136. A helical transmembrane segment spans residues 171 to 191 (ILTVSLLELGLAQGVADLCAV). The Cytoplasmic portion of the chain corresponds to 192-193 (AP). Residues 194-214 (FACLLGVTVGSIGFIFWLALI) traverse the membrane as a helical segment. At 215–219 (YNAIQ) the chain is on the extracellular side.

It belongs to the OSW4/6 family. Post-translationally, N-glycosylated.

Its subcellular location is the membrane. Functionally, involved in spore wall assembly. May be involved in maintaining genome integrity. This Saccharomyces cerevisiae (strain ATCC 204508 / S288c) (Baker's yeast) protein is Outer spore wall protein 4.